An 858-amino-acid chain; its full sequence is Phospholipase D gamma 1 (858 aa).

A C2 domain is found at 27–163 (PFATSSGSLR…CSGNRIEGLF (137 aa)). Ca(2+) is bound at residue aspartate 225. Residues 364 to 399 (TIYTHHQKTVIVDAEAAQNRRKIVAFVGGLDLCNGR) enclose the PLD phosphodiesterase 1 domain. Catalysis depends on residues histidine 369, lysine 371, and aspartate 376. Histidine 369 contacts a 1,2-diacyl-sn-glycero-3-phosphate. Positions 405 and 437 each coordinate Ca(2+). Glutamine 565 lines the a 1,2-diacyl-sn-glycero-3-phosphate pocket. Serine 680 bears the Phosphoserine mark. Residues 704 to 731 (FMIYVHSKGMVVDDEFVLIGSANINQRS) enclose the PLD phosphodiesterase 2 domain. Residues histidine 709, lysine 711, and aspartate 716 contribute to the active site. Histidine 709 is an a 1,2-diacyl-sn-glycero-3-phosphate binding site. Glutamate 772 provides a ligand contact to Ca(2+).

The protein belongs to the phospholipase D family. C2-PLD subfamily. The cofactor is Ca(2+). As to expression, highly expressed in roots and flowers, moderately in stems, leaves and seedlings and low in siliques. Not detected in seeds.

The protein resides in the cytoplasm. It localises to the membrane. It catalyses the reaction a 1,2-diacyl-sn-glycero-3-phosphocholine + H2O = a 1,2-diacyl-sn-glycero-3-phosphate + choline + H(+). Inhibited by neomycin. Up-regulated by PIP2 binding. In terms of biological role, hydrolyzes glycerol-phospholipids at the terminal phosphodiesteric bond to generate phosphatidic acids (PA). Plays an important role in various cellular processes, including phytohormone action, vesicular trafficking, secretion, cytoskeletal arrangement, meiosis, tumor promotion, pathogenesis, membrane deterioration and senescence. Can use phosphatidylserine (PS) and phosphatidylethanolamine (PE) as substrates only in the presence of PIP2. Can use phosphatidylcholine (PC), phosphatidylglycerol (PG) or N-acylphosphatidylethanolamine (NAPE) as substrates in the presence of PE and PIP2. Involved in membrane lipid modulation under aluminum (Al) stress and negatively modulate plant tolerance to Al. This Arabidopsis thaliana (Mouse-ear cress) protein is Phospholipase D gamma 1.